The primary structure comprises 142 residues: Large ribosomal subunit protein uL11 (142 aa).

This sequence belongs to the universal ribosomal protein uL11 family. In terms of assembly, part of the ribosomal stalk of the 50S ribosomal subunit. Interacts with L10 and the large rRNA to form the base of the stalk. L10 forms an elongated spine to which L12 dimers bind in a sequential fashion forming a multimeric L10(L12)X complex. Post-translationally, one or more lysine residues are methylated.

Its function is as follows. Forms part of the ribosomal stalk which helps the ribosome interact with GTP-bound translation factors. The polypeptide is Large ribosomal subunit protein uL11 (Acidithiobacillus ferrooxidans (strain ATCC 23270 / DSM 14882 / CIP 104768 / NCIMB 8455) (Ferrobacillus ferrooxidans (strain ATCC 23270))).